A 382-amino-acid polypeptide reads, in one-letter code: Galactokinase (382 aa).

34–37 (EHTD) contributes to the substrate binding site. An ATP-binding site is contributed by 124 to 130 (GAGLSSS). 2 residues coordinate Mg(2+): Ser130 and Glu162. Asp174 acts as the Proton acceptor in catalysis. Tyr223 contributes to the substrate binding site.

It belongs to the GHMP kinase family. GalK subfamily.

It is found in the cytoplasm. It catalyses the reaction alpha-D-galactose + ATP = alpha-D-galactose 1-phosphate + ADP + H(+). The protein operates within carbohydrate metabolism; galactose metabolism. Its function is as follows. Catalyzes the transfer of the gamma-phosphate of ATP to D-galactose to form alpha-D-galactose-1-phosphate (Gal-1-P). The polypeptide is Galactokinase (Escherichia coli O17:K52:H18 (strain UMN026 / ExPEC)).